Consider the following 249-residue polypeptide: Triosephosphate isomerase (249 aa).

Asparagine 10 and lysine 12 together coordinate substrate. The active-site Electrophile is the histidine 94. Glutamate 166 acts as the Proton acceptor in catalysis.

This sequence belongs to the triosephosphate isomerase family. As to quaternary structure, homodimer. In terms of processing, the N-terminus is blocked.

The catalysed reaction is D-glyceraldehyde 3-phosphate = dihydroxyacetone phosphate. It participates in carbohydrate biosynthesis; gluconeogenesis. Its pathway is carbohydrate degradation; glycolysis; D-glyceraldehyde 3-phosphate from glycerone phosphate: step 1/1. The sequence is that of Triosephosphate isomerase (TPI1) from Paracoccidioides lutzii (strain ATCC MYA-826 / Pb01) (Paracoccidioides brasiliensis).